The chain runs to 491 residues: Probable glycine dehydrogenase (decarboxylating) subunit 2 (491 aa).

Position 273 is an N6-(pyridoxal phosphate)lysine (lysine 273).

It belongs to the GcvP family. C-terminal subunit subfamily. The glycine cleavage system is composed of four proteins: P, T, L and H. In this organism, the P 'protein' is a heterodimer of two subunits. It depends on pyridoxal 5'-phosphate as a cofactor.

It catalyses the reaction N(6)-[(R)-lipoyl]-L-lysyl-[glycine-cleavage complex H protein] + glycine + H(+) = N(6)-[(R)-S(8)-aminomethyldihydrolipoyl]-L-lysyl-[glycine-cleavage complex H protein] + CO2. In terms of biological role, the glycine cleavage system catalyzes the degradation of glycine. The P protein binds the alpha-amino group of glycine through its pyridoxal phosphate cofactor; CO(2) is released and the remaining methylamine moiety is then transferred to the lipoamide cofactor of the H protein. The sequence is that of Probable glycine dehydrogenase (decarboxylating) subunit 2 from Bacillus cereus (strain ATCC 10987 / NRS 248).